We begin with the raw amino-acid sequence, 89 residues long: Small ribosomal subunit protein uS15 (89 aa).

Belongs to the universal ribosomal protein uS15 family. In terms of assembly, part of the 30S ribosomal subunit. Forms a bridge to the 50S subunit in the 70S ribosome, contacting the 23S rRNA.

Its function is as follows. One of the primary rRNA binding proteins, it binds directly to 16S rRNA where it helps nucleate assembly of the platform of the 30S subunit by binding and bridging several RNA helices of the 16S rRNA. Functionally, forms an intersubunit bridge (bridge B4) with the 23S rRNA of the 50S subunit in the ribosome. The protein is Small ribosomal subunit protein uS15 of Dictyoglomus turgidum (strain DSM 6724 / Z-1310).